We begin with the raw amino-acid sequence, 216 residues long: Adenylate kinase (216 aa).

10–15 (GAGKGT) is a binding site for ATP. Residues 30 to 59 (STGDIFRANIKEKTPLGIEAKRYMDNGQLV) are NMP. AMP is bound by residues Thr31, Arg36, 57-59 (QLV), 85-88 (GFPR), and Gln92. The LID stretch occupies residues 126-163 (GRRVCTSCGASYHIRFNPPKIEGKCDICDNELIQRKDD). Arg127 contacts ATP. Residues Cys130 and Cys133 each contribute to the Zn(2+) site. ATP is bound at residue 136 to 137 (SY). The Zn(2+) site is built by Cys150 and Cys153. Residues Arg160 and Arg171 each contribute to the AMP site. Glu199 is a binding site for ATP.

Belongs to the adenylate kinase family. As to quaternary structure, monomer.

The protein resides in the cytoplasm. It carries out the reaction AMP + ATP = 2 ADP. The protein operates within purine metabolism; AMP biosynthesis via salvage pathway; AMP from ADP: step 1/1. Catalyzes the reversible transfer of the terminal phosphate group between ATP and AMP. Plays an important role in cellular energy homeostasis and in adenine nucleotide metabolism. This chain is Adenylate kinase, found in Clostridium botulinum (strain Loch Maree / Type A3).